The sequence spans 380 residues: Cytochrome b (380 aa).

4 helical membrane passes run 33–53 (FGSLLGVCLIIQILTGLFLAM), 77–98 (WLIRYLHANGASMFFICLFIHV), 113–133 (WNIGIVLLLTTMATAFVGYVL), and 178–198 (FFAFHFILPFIITALVLVHLL). Heme b is bound by residues H83 and H97. Heme b is bound by residues H182 and H196. An a ubiquinone-binding site is contributed by H201. The next 4 membrane-spanning stretches (helical) occupy residues 226 to 246 (IKDLLGVLLLLMVLTILVLFF), 288 to 308 (LGGVXALXLSILILXXXPLLN), 320 to 340 (ITQVLYWIFXXNLXXXXXXXX), and 347 to 367 (XXXXXQIASICYXAIIIIFMP).

It belongs to the cytochrome b family. As to quaternary structure, the cytochrome bc1 complex contains 11 subunits: 3 respiratory subunits (MT-CYB, CYC1 and UQCRFS1), 2 core proteins (UQCRC1 and UQCRC2) and 6 low-molecular weight proteins (UQCRH/QCR6, UQCRB/QCR7, UQCRQ/QCR8, UQCR10/QCR9, UQCR11/QCR10 and a cleavage product of UQCRFS1). This cytochrome bc1 complex then forms a dimer. It depends on heme b as a cofactor.

It localises to the mitochondrion inner membrane. Component of the ubiquinol-cytochrome c reductase complex (complex III or cytochrome b-c1 complex) that is part of the mitochondrial respiratory chain. The b-c1 complex mediates electron transfer from ubiquinol to cytochrome c. Contributes to the generation of a proton gradient across the mitochondrial membrane that is then used for ATP synthesis. This Rhipidomys leucodactylus (White-footed climbing mouse) protein is Cytochrome b (MT-CYB).